We begin with the raw amino-acid sequence, 253 residues long: 5'-nucleotidase SurE (253 aa).

Positions 8, 9, 40, and 97 each coordinate a divalent metal cation.

It belongs to the SurE nucleotidase family. A divalent metal cation is required as a cofactor.

The protein resides in the cytoplasm. It carries out the reaction a ribonucleoside 5'-phosphate + H2O = a ribonucleoside + phosphate. Functionally, nucleotidase that shows phosphatase activity on nucleoside 5'-monophosphates. The protein is 5'-nucleotidase SurE of Desulforamulus reducens (strain ATCC BAA-1160 / DSM 100696 / MI-1) (Desulfotomaculum reducens).